Here is a 190-residue protein sequence, read N- to C-terminus: Peptidyl-tRNA hydrolase (190 aa).

Y14 serves as a coordination point for tRNA. The Proton acceptor role is filled by H19. TRNA contacts are provided by Y64, N66, and N112.

Belongs to the PTH family. Monomer.

It is found in the cytoplasm. It catalyses the reaction an N-acyl-L-alpha-aminoacyl-tRNA + H2O = an N-acyl-L-amino acid + a tRNA + H(+). In terms of biological role, hydrolyzes ribosome-free peptidyl-tRNAs (with 1 or more amino acids incorporated), which drop off the ribosome during protein synthesis, or as a result of ribosome stalling. Its function is as follows. Catalyzes the release of premature peptidyl moieties from peptidyl-tRNA molecules trapped in stalled 50S ribosomal subunits, and thus maintains levels of free tRNAs and 50S ribosomes. In Chlorobium limicola (strain DSM 245 / NBRC 103803 / 6330), this protein is Peptidyl-tRNA hydrolase.